We begin with the raw amino-acid sequence, 386 residues long: TGF-beta-activated kinase 1 and MAP3K7-binding protein 1 (386 aa).

The region spanning 22-327 (HSCRYSKQKN…EEMTVIYVKL (306 aa)) is the PPM-type phosphatase domain.

As to quaternary structure, interacts with mom-4; the interaction enhances mom-4 kinase activity.

Its function is as follows. Involved in the Wnt signaling pathway by regulating mom-4 kinase activity. This Caenorhabditis elegans protein is TGF-beta-activated kinase 1 and MAP3K7-binding protein 1.